Reading from the N-terminus, the 358-residue chain is Cilia- and flagella-associated protein 263 (358 aa).

Coiled coils occupy residues 93 to 138 (YKKM…FKRN), 176 to 200 (RKNS…EMAE), and 266 to 343 (RTKL…YTKS).

It belongs to the CFAP263 family. Forms a complex with CFAP184; the interaction is required for functional activity in cilia. Interacts with HAP1 and PCM1.

The protein localises to the cytoplasm. It localises to the cytoskeleton. It is found in the microtubule organizing center. Its subcellular location is the centrosome. The protein resides in the centriolar satellite. The protein localises to the cell projection. It localises to the cilium. Its function is as follows. Component of centriolar satellites contributing to primary cilium formation. In complex with CFAP263, acts as a regulator of ciliary beating that connects radial spoke 3 (RS3) to the inner dynein arm (IDA) and the nexin-dynein regulatory complex (N-DRC). The complex is positioned parallel to N-DRC and forms a connection between the arch at the base of RS3, the IDA tail and N-DRC. The polypeptide is Cilia- and flagella-associated protein 263 (cfap263) (Danio rerio (Zebrafish)).